The sequence spans 455 residues: MEFSEWYSDILEKAEIYDVRYPIKGCGVYLPYGFKIRRYTFEIIRNLLDESGHDEALFPMLIPEDLLAKEAEHIKGFEDEVYWVTHGGKTQLDVKLALRPTSETPIYYMMKLWVKVHTDLPIKIYQIVNTFRYETKHTRPLIRLREIMTFKEAHTAHSTKEEAENQVKEAISIYKKFFDTLGIPYLISKRPEWDKFPGAEYTMAFDTIFPDGRTMQIATVHNLGQNFSKTFEIIFETPTGDKDYAYQTCYGISDRVIASIIAIHGDEKGLILPPIVAPIQVVIVPLIFKGKEDIVMEKAKEIYEKLKGKFRVHIDDRDIRPGRKFNDWEIKGVPLRIEVGPKDIENKKITLFRRDTMEKFQVDETQLMEVVEKTLNNIMENIKNRAWEKFENFITILEDINPDEIKNILSEKRGVILVPFKEEIYNEELEEKVEATILGETEYKGNKYIAIAKTY.

L-proline contacts are provided by Thr-101, Glu-103, and Arg-132. The ATP site is built by Arg-132, Glu-134, Gln-216, and Thr-219. His-221 is an L-proline binding site. The ATP site is built by Ser-253 and Arg-255. The tract at residues 329-359 (EIKGVPLRIEVGPKDIENKKITLFRRDTMEK) is interaction with tRNA.

It belongs to the class-II aminoacyl-tRNA synthetase family. ProS type 3 subfamily. Homodimer. The dimer is functionally asymmetric: only one of the two active sites at a time is able to form prolyl-adenylate, and only one tRNA molecule binds per dimer.

Its subcellular location is the cytoplasm. The catalysed reaction is tRNA(Pro) + L-proline + ATP = L-prolyl-tRNA(Pro) + AMP + diphosphate. Inhibited by high concentrations of prolinamide. Catalyzes the attachment of proline to tRNA(Pro) in a two-step reaction: proline is first activated by ATP to form Pro-AMP and then transferred to the acceptor end of tRNA(Pro). Can inadvertently accommodate and process non-cognate amino acids such as cysteine and alanine. The polypeptide is Proline--tRNA ligase (proS) (Methanocaldococcus jannaschii (strain ATCC 43067 / DSM 2661 / JAL-1 / JCM 10045 / NBRC 100440) (Methanococcus jannaschii)).